Consider the following 93-residue polypeptide: UPF0213 protein CPE1444 (93 aa).

A GIY-YIG domain is found at 1–75; it reads MNYVYILKCK…KKLTRNQKLQ (75 aa).

Belongs to the UPF0213 family.

This is UPF0213 protein CPE1444 from Clostridium perfringens (strain 13 / Type A).